The primary structure comprises 118 residues: Basic phospholipase A2 CM-III (118 aa).

Intrachain disulfides connect cysteine 11–cysteine 70, cysteine 26–cysteine 117, cysteine 28–cysteine 44, cysteine 43–cysteine 98, cysteine 50–cysteine 91, cysteine 59–cysteine 84, and cysteine 77–cysteine 89. Positions 27, 29, and 31 each coordinate Ca(2+). Histidine 47 is an active-site residue. Aspartate 48 contacts Ca(2+). A Coagulation factor Xa binding motif motif is present at residues glutamate 52–lysine 69. The active site involves aspartate 92.

Belongs to the phospholipase A2 family. Group I subfamily. D49 sub-subfamily. It depends on Ca(2+) as a cofactor. As to expression, expressed by the venom gland.

It is found in the secreted. It catalyses the reaction a 1,2-diacyl-sn-glycero-3-phosphocholine + H2O = a 1-acyl-sn-glycero-3-phosphocholine + a fatty acid + H(+). In terms of biological role, snake venom phospholipase A2 (PLA2) that shows several activities. It shows strong anticoagulant activity, probably by binding to coagulation factor Xa (F10) and inhibiting the formation of the prothrombinase complex, shows direct hemolytic action, causes neuromuscular blockade with a gradual contracture and a decreased sensitivity to ACh and KCl, abolishes twitches evoked by indirect stimulation earlier than those by direct stimulation (in the mouse phrenic nerve-diaphragm preparation), and causes myonecrosis when injected intramuscularly. PLA2 catalyzes the calcium-dependent hydrolysis of the 2-acyl groups in 3-sn-phosphoglycerides. The chain is Basic phospholipase A2 CM-III from Naja mossambica (Mozambique spitting cobra).